Consider the following 66-residue polypeptide: Photosystem II reaction center protein J (66 aa).

The interval 1-23 (MSGNKSPFPDGRIPDRLPDGRPA) is disordered. The chain crosses the membrane as a helical span at residues 37-57 (LWLVATAGGMAVLFVVGLFFY).

This sequence belongs to the PsbJ family. As to quaternary structure, PSII is composed of 1 copy each of membrane proteins PsbA, PsbB, PsbC, PsbD, PsbE, PsbF, PsbH, PsbI, PsbJ, PsbK, PsbL, PsbM, PsbT, PsbX, PsbY, PsbZ, Psb30/Ycf12, peripheral proteins PsbO, CyanoQ (PsbQ), PsbU, PsbV and a large number of cofactors. It forms dimeric complexes.

Its subcellular location is the cellular thylakoid membrane. One of the components of the core complex of photosystem II (PSII). PSII is a light-driven water:plastoquinone oxidoreductase that uses light energy to abstract electrons from H(2)O, generating O(2) and a proton gradient subsequently used for ATP formation. It consists of a core antenna complex that captures photons, and an electron transfer chain that converts photonic excitation into a charge separation. The sequence is that of Photosystem II reaction center protein J from Parasynechococcus marenigrum (strain WH8102).